A 67-amino-acid polypeptide reads, in one-letter code: ATP synthase F(0) complex subunit 8 (67 aa).

The helical transmembrane segment at 8–24 threads the bilayer; that stretch reads TWFITIVSMLLSLFILM. Lys54 is subject to N6-acetyllysine; alternate. Residue Lys54 is modified to N6-succinyllysine; alternate. At Lys57 the chain carries N6-acetyllysine.

It belongs to the ATPase protein 8 family. Component of the ATP synthase complex composed at least of ATP5F1A/subunit alpha, ATP5F1B/subunit beta, ATP5MC1/subunit c (homooctomer), MT-ATP6/subunit a, MT-ATP8/subunit 8, ATP5ME/subunit e, ATP5MF/subunit f, ATP5MG/subunit g, ATP5MK/subunit k, ATP5MJ/subunit j, ATP5F1C/subunit gamma, ATP5F1D/subunit delta, ATP5F1E/subunit epsilon, ATP5PF/subunit F6, ATP5PB/subunit b, ATP5PD/subunit d, ATP5PO/subunit OSCP. ATP synthase complex consists of a soluble F(1) head domain (subunits alpha(3) and beta(3)) - the catalytic core - and a membrane F(0) domain - the membrane proton channel (subunits c, a, 8, e, f, g, k and j). These two domains are linked by a central stalk (subunits gamma, delta, and epsilon) rotating inside the F1 region and a stationary peripheral stalk (subunits F6, b, d, and OSCP). Interacts with PRICKLE3.

It is found in the mitochondrion membrane. Its function is as follows. Subunit 8, of the mitochondrial membrane ATP synthase complex (F(1)F(0) ATP synthase or Complex V) that produces ATP from ADP in the presence of a proton gradient across the membrane which is generated by electron transport complexes of the respiratory chain. ATP synthase complex consist of a soluble F(1) head domain - the catalytic core - and a membrane F(1) domain - the membrane proton channel. These two domains are linked by a central stalk rotating inside the F(1) region and a stationary peripheral stalk. During catalysis, ATP synthesis in the catalytic domain of F(1) is coupled via a rotary mechanism of the central stalk subunits to proton translocation. In vivo, can only synthesize ATP although its ATP hydrolase activity can be activated artificially in vitro. Part of the complex F(0) domain. In Dasypus novemcinctus (Nine-banded armadillo), this protein is ATP synthase F(0) complex subunit 8.